A 1103-amino-acid polypeptide reads, in one-letter code: Isoleucine--tRNA ligase (1103 aa).

Positions 53–63 match the 'HIGH' region motif; it reads PFANGLPHYGH. The 'KMSKS' region signature appears at 628-632; it reads KLSKR. Lys631 contacts ATP.

Belongs to the class-I aminoacyl-tRNA synthetase family. IleS type 2 subfamily. In terms of assembly, monomer. Zn(2+) serves as cofactor.

Its subcellular location is the cytoplasm. It catalyses the reaction tRNA(Ile) + L-isoleucine + ATP = L-isoleucyl-tRNA(Ile) + AMP + diphosphate. Catalyzes the attachment of isoleucine to tRNA(Ile). As IleRS can inadvertently accommodate and process structurally similar amino acids such as valine, to avoid such errors it has two additional distinct tRNA(Ile)-dependent editing activities. One activity is designated as 'pretransfer' editing and involves the hydrolysis of activated Val-AMP. The other activity is designated 'posttransfer' editing and involves deacylation of mischarged Val-tRNA(Ile). This is Isoleucine--tRNA ligase from Rickettsia akari (strain Hartford).